Here is a 378-residue protein sequence, read N- to C-terminus: Deoxyguanosinetriphosphate triphosphohydrolase-like protein (378 aa).

Residues 1 to 28 (MLAPYACQPGESRGRQQPESMSTFRSPF) form a disordered region. Positions 15-26 (RQQPESMSTFRS) are enriched in polar residues. The 137-residue stretch at 62–198 (RLTHSIEVAQ…AAIADDVAYS (137 aa)) folds into the HD domain.

It belongs to the dGTPase family. Type 2 subfamily.

The sequence is that of Deoxyguanosinetriphosphate triphosphohydrolase-like protein from Cereibacter sphaeroides (strain ATCC 17025 / ATH 2.4.3) (Rhodobacter sphaeroides).